The primary structure comprises 413 residues: Enhanced ethylene response protein 5 (413 aa).

The 187-residue stretch at 216–402 folds into the PCI domain; that stretch reads VTYMYYTGRL…KVVVLSKQDP (187 aa).

Interacts with EIN2 (via C-terminus). May also interact weakly with CSN8. Interacts with DSS1(V), AMPD, SAC3A, SAC3B and At5g61290 (AC Q9FLK4). Interacts with UCH1 and UCH2. Interacts with NUP1, anchoring the TREX-2 complex on the nuclear pore complex. Expressed at low levels in roots, leaves, stems and shoots. Detected in seedlings, roots, leaves and anthers.

The protein localises to the nucleus. Its function is as follows. Involved in the regulation of ethylene response. Probable TREX-2 component required for nuclear RNA export. The TREX-2 complex (transcription and export complex 2) functions in docking export-competent ribonucleoprotein particles (mRNPs) to the nuclear entrance of the nuclear pore complex (nuclear basket). TREX-2 participates in mRNA export and accurate chromatin positioning in the nucleus by tethering genes to the nuclear periphery. This chain is Enhanced ethylene response protein 5, found in Arabidopsis thaliana (Mouse-ear cress).